The sequence spans 204 residues: dITP/XTP pyrophosphatase (204 aa).

Substrate is bound at residue 8–13 (TKNAGK). D70 functions as the Proton acceptor in the catalytic mechanism. D70 serves as a coordination point for Mg(2+). Substrate-binding positions include S71, 153-156 (FGYD), K176, and 181-182 (HR).

The protein belongs to the HAM1 NTPase family. In terms of assembly, homodimer. Mg(2+) serves as cofactor.

It carries out the reaction XTP + H2O = XMP + diphosphate + H(+). The catalysed reaction is dITP + H2O = dIMP + diphosphate + H(+). It catalyses the reaction ITP + H2O = IMP + diphosphate + H(+). Pyrophosphatase that catalyzes the hydrolysis of nucleoside triphosphates to their monophosphate derivatives, with a high preference for the non-canonical purine nucleotides XTP (xanthosine triphosphate), dITP (deoxyinosine triphosphate) and ITP. Seems to function as a house-cleaning enzyme that removes non-canonical purine nucleotides from the nucleotide pool, thus preventing their incorporation into DNA/RNA and avoiding chromosomal lesions. The chain is dITP/XTP pyrophosphatase from Geobacillus kaustophilus (strain HTA426).